A 429-amino-acid chain; its full sequence is MSRSEILFANAQKHIPGGVNSPVRAFRSVGGTPLFFKHAEGAYVVDEDDKRYVDYVGSWGPMILGHSHPDVLDSVRRQLQHGLSYGAPTALETEMAELVCSLVPSMEMVRMVSSGTEATMSAIRLARGYTGRDSIIKFEGCYHGHSDSLLVKAGSGALTQGVPNSAGVPAAFAKHTLTLPFNDIDAVAECLAQVGKEVACIIVEPVAGNMNCVPPAPGFLEGLREQCDKHGVVLIFDEVMTGFRVALGGAQAHYGVTPDLTTFGKIIGGGMPVGCFGGKRAIMECIAPLGPVYQAGTLSGNPLAMAAGLTTLKLISRPGFHTELSDYTTRMLDGLQQRADAAGIPFVTTQAGAMFGLYFSGADDIVTFADVMASDSARFNRFFHLMLEGGVYLAPSAFEAGFTSIAHGDKELEITFAAAERAFAELKKA.

Lysine 265 carries the N6-(pyridoxal phosphate)lysine modification.

It belongs to the class-III pyridoxal-phosphate-dependent aminotransferase family. HemL subfamily. In terms of assembly, homodimer. The cofactor is pyridoxal 5'-phosphate.

It localises to the cytoplasm. The enzyme catalyses (S)-4-amino-5-oxopentanoate = 5-aminolevulinate. Its pathway is porphyrin-containing compound metabolism; protoporphyrin-IX biosynthesis; 5-aminolevulinate from L-glutamyl-tRNA(Glu): step 2/2. This is Glutamate-1-semialdehyde 2,1-aminomutase from Ectopseudomonas mendocina (strain ymp) (Pseudomonas mendocina).